The following is a 357-amino-acid chain: Peptide chain release factor 1 (357 aa).

An N5-methylglutamine modification is found at glutamine 234. A disordered region spans residues 249 to 308; the sequence is PSGVEVSCQDEKSQHKNRSKAMRVLRSRVYEKKREEQQAEREEARRSMVGSGDRSAKIRT. Over residues 263–274 the composition is skewed to basic residues; the sequence is HKNRSKAMRVLR. Positions 276–294 are enriched in basic and acidic residues; sequence RVYEKKREEQQAEREEARR.

This sequence belongs to the prokaryotic/mitochondrial release factor family. In terms of processing, methylated by PrmC. Methylation increases the termination efficiency of RF1.

It localises to the cytoplasm. Its function is as follows. Peptide chain release factor 1 directs the termination of translation in response to the peptide chain termination codons UAG and UAA. This Salinibacter ruber (strain DSM 13855 / M31) protein is Peptide chain release factor 1.